Consider the following 228-residue polypeptide: UPF0758 protein Gura_4138 (228 aa).

In terms of domain architecture, MPN spans 106–228; it reads RFTSPSQVFE…FLSFVDRGMM (123 aa). Residues histidine 177, histidine 179, and aspartate 190 each contribute to the Zn(2+) site. Positions 177–190 match the JAMM motif motif; sequence HNHPTGDPTPSRED.

This sequence belongs to the UPF0758 family.

The polypeptide is UPF0758 protein Gura_4138 (Geotalea uraniireducens (strain Rf4) (Geobacter uraniireducens)).